Consider the following 358-residue polypeptide: DNA integrity scanning protein DisA (358 aa).

The 139-residue stretch at 6–144 (RPTLREAVAR…RGERHVLTDS (139 aa)) folds into the DAC domain. ATP is bound by residues G73, L91, and 104 to 108 (TRHRS).

It belongs to the DisA family. In terms of assembly, homooctamer. The cofactor is Mg(2+).

It carries out the reaction 2 ATP = 3',3'-c-di-AMP + 2 diphosphate. Its function is as follows. Participates in a DNA-damage check-point. DisA forms globular foci that rapidly scan along the chromosomes searching for lesions. Also has diadenylate cyclase activity, catalyzing the condensation of 2 ATP molecules into cyclic di-AMP (c-di-AMP). c-di-AMP likely acts as a signaling molecule that may couple DNA integrity with a cellular process. The sequence is that of DNA integrity scanning protein DisA from Mycobacterium tuberculosis (strain ATCC 25177 / H37Ra).